A 512-amino-acid polypeptide reads, in one-letter code: Glycosyltransferase sdnJ (512 aa).

A signal peptide spans 1–24 (MHAKRPSVLFFTISDFGYVNVVLA). Asparagine 207 carries N-linked (GlcNAc...) asparagine glycosylation.

The protein belongs to the UDP-glycosyltransferase family.

The enzyme catalyses sordaricin + GDP-6-deoxy-alpha-D-altrose = 4'-O-demethylsordarin + GDP + H(+). The protein operates within antibiotic biosynthesis. Glycosyltransferase; part of the gene cluster that mediates the biosynthesis of sordarin and hypoxysordarin, glycoside antibiotics with a unique tetracyclic diterpene aglycone structure. First, the geranylgeranyl diphosphate synthase sdnC constructs GGDP from farnesyl diphosphate and isopentenyl diphosphate. The diterpene cyclase sdnA then catalyzes the cyclization of GGDP to afford cycloaraneosene. Cycloaraneosene is then hydroxylated four times by the putative cytochrome P450 monooxygenases sdnB, sdnE, sdnF and sdnH to give a hydroxylated cycloaraneosene derivative such as cycloaraneosene-8,9,13,19-tetraol. Although the order of the hydroxylations is unclear, at least C8, C9 and C13 of the cycloaraneosene skeleton are hydroxylated before the sordaricin formation. Dehydration of the 13-hydroxy group of the hydroxylated cycloaraneosene derivative might be catalyzed by an unassigned hypothetical protein such as sdnG and sdnP to construct the cyclopentadiene moiety. The FAD-dependent oxidoreductase sdnN is proposed to catalyze the oxidation at C9 of the hydroxylated cycloaraneosene derivative and also catalyze the Baeyer-Villiger oxidation to give the lactone intermediate. The presumed lactone intermediate would be hydrolyzed to give an acrolein moiety and a carboxylate moiety. Then, [4+2]cycloaddition would occur between the acrolein moiety and the cyclopentadiene moiety to give sordaricin. SdnN might also be involved in the [4+2]cycloaddition after the hypothesized oxidation to accommodate the oxidized product and prompt the [4+2]cycloaddition. GDP-6-deoxy-D-altrose may be biosynthesized from GDP-D-mannose by the putative GDP-mannose-4,6-dehydratase sdnI and the short-chain dehydrogenase sdnK. The glycosyltransferase sdnJ catalyzes the attachment of 6-deoxy-D-altrose onto the 19-hydroxy group of sordaricin to give 4'-O-demethylsordarin. The methyltransferase sdnD would complete the biosynthesis of sordarin. Sordarin can be further modified into hypoxysordarin. The unique acyl chain at the 3'-hydroxy group of hypoxysordarin would be constructed by an iterative type I PKS sdnO and the trans-acting polyketide methyltransferase sdnL. SdnL would be responsible for the introduction of an alpha-methyl group of the polyketide chain. Alternatively, the beta-lactamase-like protein sdnR might be responsible for the cleavage and transfer of the polyketide chain from the PKS sdnO to sordarin. Two putative cytochrome P450 monooxygenases, sdnQ and sdnT, might catalyze the epoxidations of the polyketide chain to complete the biosynthesis of hypoxysordarin. Transcriptional regulators sdnM and sdnS are presumably encoded for the transcriptional regulation of the expression of the sdn gene cluster. This Sordaria araneosa (Pleurage araneosa) protein is Glycosyltransferase sdnJ.